The sequence spans 89 residues: Albumin-1 (89 aa).

Residue Ala-1 is a signal peptide. Disulfide bonds link Cys-4-Cys-21, Cys-8-Cys-23, and Cys-16-Cys-33. Positions 39–46 are excised as a propeptide; that stretch reads LSSVAKMI.

Post-translationally, the C-terminal glycine may be removed from A1b.

A1b binds to basic 7S globulin (BG) and stimulates its phosphorylation activity. This chain is Albumin-1 (LEG), found in Vigna radiata var. radiata (Mung bean).